A 287-amino-acid polypeptide reads, in one-letter code: Bifunctional protein FolD (287 aa).

NADP(+) is bound by residues 166–168 (GAS), Ser-191, and Ile-232.

Belongs to the tetrahydrofolate dehydrogenase/cyclohydrolase family. Homodimer.

It catalyses the reaction (6R)-5,10-methylene-5,6,7,8-tetrahydrofolate + NADP(+) = (6R)-5,10-methenyltetrahydrofolate + NADPH. It carries out the reaction (6R)-5,10-methenyltetrahydrofolate + H2O = (6R)-10-formyltetrahydrofolate + H(+). It participates in one-carbon metabolism; tetrahydrofolate interconversion. Functionally, catalyzes the oxidation of 5,10-methylenetetrahydrofolate to 5,10-methenyltetrahydrofolate and then the hydrolysis of 5,10-methenyltetrahydrofolate to 10-formyltetrahydrofolate. This Haemophilus ducreyi (strain 35000HP / ATCC 700724) protein is Bifunctional protein FolD.